Here is a 333-residue protein sequence, read N- to C-terminus: Holliday junction branch migration complex subunit RuvB (333 aa).

The tract at residues 4-185 (IDRLVSTDVL…FGIVQRLEFY (182 aa)) is large ATPase domain (RuvB-L). ATP-binding positions include Ile-24, Arg-25, Gly-66, Lys-69, Thr-70, Thr-71, 132–134 (EDY), Arg-175, Tyr-185, and Arg-222. Thr-70 lines the Mg(2+) pocket. The small ATPAse domain (RuvB-S) stretch occupies residues 186–256 (SVPDLEHIVS…IAIKALEMLN (71 aa)). The interval 259 to 333 (KEGLDYMDSK…HAYQHFICGG (75 aa)) is head domain (RuvB-H). Positions 295, 314, and 319 each coordinate DNA.

The protein belongs to the RuvB family. In terms of assembly, homohexamer. Forms an RuvA(8)-RuvB(12)-Holliday junction (HJ) complex. HJ DNA is sandwiched between 2 RuvA tetramers; dsDNA enters through RuvA and exits via RuvB. An RuvB hexamer assembles on each DNA strand where it exits the tetramer. Each RuvB hexamer is contacted by two RuvA subunits (via domain III) on 2 adjacent RuvB subunits; this complex drives branch migration. In the full resolvosome a probable DNA-RuvA(4)-RuvB(12)-RuvC(2) complex forms which resolves the HJ.

It localises to the cytoplasm. The catalysed reaction is ATP + H2O = ADP + phosphate + H(+). Its function is as follows. The RuvA-RuvB-RuvC complex processes Holliday junction (HJ) DNA during genetic recombination and DNA repair, while the RuvA-RuvB complex plays an important role in the rescue of blocked DNA replication forks via replication fork reversal (RFR). RuvA specifically binds to HJ cruciform DNA, conferring on it an open structure. The RuvB hexamer acts as an ATP-dependent pump, pulling dsDNA into and through the RuvAB complex. RuvB forms 2 homohexamers on either side of HJ DNA bound by 1 or 2 RuvA tetramers; 4 subunits per hexamer contact DNA at a time. Coordinated motions by a converter formed by DNA-disengaged RuvB subunits stimulates ATP hydrolysis and nucleotide exchange. Immobilization of the converter enables RuvB to convert the ATP-contained energy into a lever motion, pulling 2 nucleotides of DNA out of the RuvA tetramer per ATP hydrolyzed, thus driving DNA branch migration. The RuvB motors rotate together with the DNA substrate, which together with the progressing nucleotide cycle form the mechanistic basis for DNA recombination by continuous HJ branch migration. Branch migration allows RuvC to scan DNA until it finds its consensus sequence, where it cleaves and resolves cruciform DNA. The sequence is that of Holliday junction branch migration complex subunit RuvB from Hamiltonella defensa subsp. Acyrthosiphon pisum (strain 5AT).